The sequence spans 444 residues: MVGSHKASGVLLVLLVVMATTIANGTPVVDKAKNAATAVEDTAKNAATAVGGAAASVGAKVSGAKPGAAVDVKASGAKGDSKTDDSAAFAAAWKEACAAGSTITVPKGEYMVESLEFKGPCKGPVTLELNGNFKAPATVKTTKPHAGWIDFENIADFTLNGNKAIFDGQGSLAWKANDCAKTGKCNSLPINIRFTGLTNSKINSITSTNSKLFHMNILNCKNITLSDIGIDAPPESLNTDGIHIGRSNGVNLIGAKIKTGDDCVSIGDGTENLIVENVECGPGHGISIGSLGRYPNEQPVKGVTVRKCLIKNTDNGVRIKTWPGSPPGIASNILFEDITMDNVSLPVLIDQEYCPYGHCKAGVPSQVKLSDVTIKGIKGTSATKVAVKLMCSKGVPCTNIALSDINLVHNGKEGPAVSACSNIKPILSGKLVPAACTEVAKPGP.

The first 23 residues, 1 to 23 (MVGSHKASGVLLVLLVVMATTIA), serve as a signal peptide directing secretion. PbH1 repeat units follow at residues 220-246 (CKNITLSDIGIDAPPESLNTDGIHIGR), 247-268 (SNGVNLIGAKIKTGDDCVSIGD), 270-290 (TENLIVENVECGPGHGISIGS), 300-321 (VKGVTVRKCLIKNTDNGVRIKT), and 330-351 (ASNILFEDITMDNVSLPVLIDQ). N-linked (GlcNAc...) asparagine glycosylation occurs at Asn222. Asp261 acts as the Proton donor in catalysis. A disulfide bridge links Cys263 with Cys280. The active site involves His284. N-linked (GlcNAc...) asparagine glycosylation is present at Asn342. 2 disulfide bridges follow: Cys391–Cys397 and Cys420–Cys436.

Belongs to the glycosyl hydrolase 28 family.

It localises to the secreted. Its subcellular location is the cell wall. It catalyses the reaction [(1-&gt;4)-alpha-D-galacturonosyl](n) + H2O = alpha-D-galacturonate + [(1-&gt;4)-alpha-D-galacturonosyl](n-1). Its function is as follows. May function in depolymerizing pectin during pollen development, germination, and tube growth. Acts as an exo-polygalacturonase. The protein is Exopolygalacturonase clone GBGA483 of Arabidopsis thaliana (Mouse-ear cress).